Reading from the N-terminus, the 380-residue chain is Putative ankyrin repeat protein RF_1306 (380 aa).

9 ANK repeats span residues 48–76 (NKWSDLHIAVGAKELKLVKALCNEKNINA), 80–109 (KCRTPLELAILGNDLETVKFLVQMGGKIAP), 112–143 (YGWSAIHLAIKIDNVEMVEYLYENTEFQKYDK), 170–199 (NNKTPLELAVESKNISSVKALIIKGAKFDI), 203–233 (LGYKIFELAIDSEDMKLIEYLVNHTLVGKNT), 239–268 (LEKVAQIYDKNINLSKLVKVLIKDNAGFDK), 270–299 (LGQKLLQKAIYADDLELVETLYSKGVDAQY), 303–333 (LGRSGLHHAIKANCGEELIQFLIEHTTDINY), and 337–366 (SGLNPLGLAKSNNCTVATKLLLEAGAYESY).

The protein is Putative ankyrin repeat protein RF_1306 of Rickettsia felis (strain ATCC VR-1525 / URRWXCal2) (Rickettsia azadi).